We begin with the raw amino-acid sequence, 434 residues long: Glutamyl-tRNA reductase (434 aa).

Substrate is bound by residues 49–52 (TCNR), serine 107, 112–114 (EPQ), and glutamine 118. The active-site Nucleophile is the cysteine 50. Residue 187–192 (GAGETV) participates in NADP(+) binding.

This sequence belongs to the glutamyl-tRNA reductase family. As to quaternary structure, homodimer.

It catalyses the reaction (S)-4-amino-5-oxopentanoate + tRNA(Glu) + NADP(+) = L-glutamyl-tRNA(Glu) + NADPH + H(+). It participates in porphyrin-containing compound metabolism; protoporphyrin-IX biosynthesis; 5-aminolevulinate from L-glutamyl-tRNA(Glu): step 1/2. Functionally, catalyzes the NADPH-dependent reduction of glutamyl-tRNA(Glu) to glutamate 1-semialdehyde (GSA). The protein is Glutamyl-tRNA reductase of Hydrogenovibrio crunogenus (strain DSM 25203 / XCL-2) (Thiomicrospira crunogena).